The following is a 698-amino-acid chain: D-(-)-3-hydroxybutyrate oligomer hydrolase (698 aa).

Positions 1-32 (MTTIRGGSRRASLPALALLGVLLGACHSDDNA) are cleaved as a signal peptide. Serine 310 functions as the Charge relay system in the catalytic mechanism.

This sequence belongs to the D-(-)-3-hydroxybutyrate oligomer hydrolase family.

It is found in the secreted. It catalyses the reaction (3R)-hydroxybutanoate dimer + H2O = 2 (R)-3-hydroxybutanoate + H(+). It functions in the pathway lipid metabolism; butanoate metabolism. Participates in the degradation of poly-3-hydroxybutyrate (PHB). It works downstream of poly(3-hydroxybutyrate) depolymerase, hydrolyzing D(-)-3-hydroxybutyrate oligomers of various length (3HB-oligomers) into 3HB-monomers. This Burkholderia thailandensis (strain ATCC 700388 / DSM 13276 / CCUG 48851 / CIP 106301 / E264) protein is D-(-)-3-hydroxybutyrate oligomer hydrolase.